Consider the following 98-residue polypeptide: NADH-ubiquinone oxidoreductase chain 4L (98 aa).

3 consecutive transmembrane segments (helical) span residues 1–21 (MTPTYMNIMLAFTISLLGMLI), 29–49 (SLLCLEGMMMSLFIMTTLIAL), and 61–81 (IILLVFAACEAAVGLALLVSI).

The protein belongs to the complex I subunit 4L family. Core subunit of respiratory chain NADH dehydrogenase (Complex I) which is composed of 45 different subunits.

The protein resides in the mitochondrion inner membrane. It catalyses the reaction a ubiquinone + NADH + 5 H(+)(in) = a ubiquinol + NAD(+) + 4 H(+)(out). Functionally, core subunit of the mitochondrial membrane respiratory chain NADH dehydrogenase (Complex I) which catalyzes electron transfer from NADH through the respiratory chain, using ubiquinone as an electron acceptor. Part of the enzyme membrane arm which is embedded in the lipid bilayer and involved in proton translocation. This Macaca maura (Moor macaque) protein is NADH-ubiquinone oxidoreductase chain 4L (MT-ND4L).